The sequence spans 601 residues: Sodium-dependent phosphate transport protein 2C (601 aa).

At 1 to 75 the chain is on the cytoplasmic side; it reads MPNSLAGGQV…RRVVSSFLKA (75 aa). Ser4 bears the Phosphoserine mark. Residues 76–96 traverse the membrane as a helical segment; the sequence is CGLLGSLYFFICSLDILSSAF. At 97–110 the chain is on the extracellular side; that stretch reads QLLGSKMAGDIFKD. Residues 111–131 traverse the membrane as a helical segment; that stretch reads NVVLSNPVAGLVIGVLVTVLV. At 132–187 the chain is on the cytoplasmic side; it reads QSSSTSSSIVVSMVASKLLTVQVSVPIIMGVNVGTSITSTLVSMAQSGDRDEFQRA. A helical transmembrane segment spans residues 188–208; the sequence is FSGSAVHGIFNWLTVLVLLPL. Topologically, residues 209-324 are extracellular; it reads ESATAALERL…FAGSKLTDLA (116 aa). N-linked (GlcNAc...) asparagine glycans are attached at residues Asn264, Asn267, and Asn299. An intrachain disulfide couples Cys275 to Cys311. A helical transmembrane segment spans residues 325–345; sequence VGFILLAGSLLVLCVCLVLIV. Over 346–369 the chain is Cytoplasmic; that stretch reads KLLNSVLKGRIAQAVKTVINADFP. A helical transmembrane segment spans residues 370 to 390; that stretch reads FPFGWLSGYLAILVGAGLTFL. Topologically, residues 391–441 are extracellular; the sequence is LQSSSVFTAAIVPLMGVGVIDLERAYPLFLGSNIGTTTTALLAALASPADM. Residues 442–462 traverse the membrane as a helical segment; sequence LIFAVQVALIHFFFNLAGILL. At 463–487 the chain is on the cytoplasmic side; sequence WYLVPVLRLPIPLAKRFGNLTAQYR. Residues 488-508 traverse the membrane as a helical segment; it reads WVAIVYLLLTFLLLPLAAFGL. The Extracellular portion of the chain corresponds to 509–512; sequence SLAG. The chain crosses the membrane as a helical span at residues 513 to 533; it reads GTVLAAVGGPLVGLVLLIILV. The Cytoplasmic portion of the chain corresponds to 534-601; that stretch reads NVLQQHRPSW…NPQVIASQQL (68 aa).

The protein belongs to the SLC34A transporter family. In terms of tissue distribution, expressed only in the kidney.

It localises to the apical cell membrane. The catalysed reaction is 2 Na(+)(out) + phosphate(out) = 2 Na(+)(in) + phosphate(in). In terms of biological role, involved in actively transporting phosphate into cells via Na(+) cotransport in the renal brush border membrane. The cotransport has a Na(+):Pi stoichiometry of 2:1 and is electroneutral. This is Sodium-dependent phosphate transport protein 2C (Slc34a3) from Mus musculus (Mouse).